Here is a 255-residue protein sequence, read N- to C-terminus: Flap endonuclease Xni (255 aa).

A Mg(2+)-binding site is contributed by D105. The 5'-3' exonuclease domain occupies 163–253 (QYQMLDFIAL…NLKQFRINPI (91 aa)). Residues L172, A173, P181, I183, and I186 each coordinate K(+). The segment at 185–190 (GIGPKS) is interaction with DNA.

The protein belongs to the Xni family. Mg(2+) is required as a cofactor. Requires K(+) as cofactor.

Its function is as follows. Has flap endonuclease activity. During DNA replication, flap endonucleases cleave the 5'-overhanging flap structure that is generated by displacement synthesis when DNA polymerase encounters the 5'-end of a downstream Okazaki fragment. This chain is Flap endonuclease Xni, found in Shewanella frigidimarina (strain NCIMB 400).